Reading from the N-terminus, the 205-residue chain is Small ribosomal subunit protein uS3 (205 aa).

Residues 12 to 80 enclose the KH type-2 domain; it reads VRQFLAKELA…PAQINIAEVR (69 aa).

It belongs to the universal ribosomal protein uS3 family. In terms of assembly, part of the 30S ribosomal subunit. Forms a tight complex with proteins S10 and S14.

In terms of biological role, binds the lower part of the 30S subunit head. Binds mRNA in the 70S ribosome, positioning it for translation. The protein is Small ribosomal subunit protein uS3 of Buchnera aphidicola subsp. Acyrthosiphon kondoi (Acyrthosiphon kondoi symbiotic bacterium).